Reading from the N-terminus, the 251-residue chain is Insulin-induced gene 1 protein (251 aa).

At 1 to 58 the chain is on the cytoplasmic side; sequence MQTLEEHCWSCSCTRGRDKKGTKVSAWLARRVGKAMSSLNSLLSLAYSTLASSEGRSL. A helical transmembrane segment spans residues 59-81; it reads IQRSLVLFTVGVFLALVLNLLQI. Topologically, residues 82–100 are extracellular; that stretch reads QRNVTLFPEEVIATIFSSA. A helical transmembrane segment spans residues 101-118; sequence WWVPPCCGTAAAVVGLLY. The Cytoplasmic segment spans residues 119–133; it reads PCIDSRIGEPHKFKR. A helical transmembrane segment spans residues 134 to 156; it reads EWASVMRCIAVFVGINHASAKLD. Over 157 to 159 the chain is Extracellular; sequence FAN. Residues 160–178 form a helical membrane-spanning segment; that stretch reads NVQLSLTLAALSLGLWWTF. The Cytoplasmic segment spans residues 179 to 183; that stretch reads DRSRS. The helical transmembrane segment at 184-205 threads the bilayer; it reads GLGLGITIAFLATLITQFLVYN. Residues 206 to 219 are Extracellular-facing; it reads GVYQYTSPDFLYIR. The chain crosses the membrane as a helical span at residues 220–237; sequence SWLPCIFFSGGVTVGNIG. Topologically, residues 238-251 are cytoplasmic; sequence RQLAMGSSEKTHGD. The KxHxx signature appears at 245-251; sequence SEKTHGD.

It belongs to the INSIG family. In terms of assembly, interacts with scap; interaction is direct and only takes place in the presence of sterols; it prevents interaction between scap and the coat protein complex II (COPII). Associates with the SCAP-SREBP complex; association is mediated via its interaction with scap and only takes place in the presence of sterols.

Its subcellular location is the endoplasmic reticulum membrane. Functionally, oxysterol-binding protein that mediates feedback control of cholesterol synthesis by controlling both endoplasmic reticulum to Golgi transport of scap and degradation of hmgcr. Acts as a negative regulator of cholesterol biosynthesis by mediating the retention of the SCAP-SREBP complex in the endoplasmic reticulum, thereby blocking the processing of sterol regulatory element-binding proteins (SREBPs). Binds oxysterol, including 25-hydroxycholesterol, regulating interaction with scap and retention of the SCAP-SREBP complex in the endoplasmic reticulum. In presence of oxysterol, interacts with scap, retaining the SCAP-SREBP complex in the endoplasmic reticulum, thereby preventing scap from escorting SREBPs to the Golgi. Sterol deprivation reduces oxysterol-binding, disrupting the interaction between insig1 and scap, thereby promoting Golgi transport of the SCAP-SREBP complex, followed by processing and nuclear translocation of SREBPs. Also regulates cholesterol synthesis by regulating degradation of hmgcr. This chain is Insulin-induced gene 1 protein, found in Xenopus laevis (African clawed frog).